Here is a 761-residue protein sequence, read N- to C-terminus: ARF GTPase-activating protein GIT1 (761 aa).

The 124-residue stretch at 1–124 (MSRKGPRAEV…AFVHKLPCRD (124 aa)) folds into the Arf-GAP domain. Residues 1 to 124 (MSRKGPRAEV…AFVHKLPCRD (124 aa)) form an interaction with gamma-tubulin and localization to the centrosome region. The C4-type zinc finger occupies 11–34 (CADCSAPDPGWASISRGVLVCDEC). ANK repeat units follow at residues 132-161 (DLSK…QANF), 166-195 (KGTT…DPGS), and 199-228 (NGRT…ELTD). Phosphotyrosine is present on Tyr-224. The interval 245 to 365 (HYIIPQMADS…QGKSLSSPTD (121 aa)) is interaction with PCLO. The tract at residues 253–415 (DSLDLSELAK…NRARSMDSSD (163 aa)) is interaction with PTK2/FAK1. An interaction with ARHGEF7 region spans residues 254-367 (SLDLSELAKA…KSLSSPTDNL (114 aa)). Residues 354–416 (RQQGKSLSSP…RARSMDSSDL (63 aa)) form a disordered region. Positions 357–374 (GKSLSSPTDNLELSLRSQ) are enriched in polar residues. A phosphoserine mark is found at Ser-359 and Ser-362. Thr-364 bears the Phosphothreonine mark. Positions 366 to 587 (NLELSLRSQS…QEGSRHTSKL (222 aa)) are interaction with NCK2 and GRIN3A. The required for localization at synapses stretch occupies residues 366–587 (NLELSLRSQS…QEGSRHTSKL (222 aa)). Residues Ser-370 and Ser-375 each carry the phosphoserine modification. A Phosphotyrosine modification is found at Tyr-383. Phosphoserine is present on residues Ser-385 and Ser-388. Residues 385–394 (SVASDEDTDQ) show a composition bias toward acidic residues. Thr-392 is modified (phosphothreonine). 3 positions are modified to phosphoserine: Ser-410, Ser-413, and Ser-417. An interaction with MAPK1 region spans residues 411–466 (MDSSDLSDGAVTLQEYLELKKALATSEAKVQQLMKVNSSLSDELRRLQREIHKLQA). The interaction with IKBKG stretch occupies residues 420-620 (AVTLQEYLEL…EGKRFLELGK (201 aa)). Residues 440-474 (VQQLMKVNSSLSDELRRLQREIHKLQAENLQLRQP) adopt a coiled-coil conformation. The segment at 471–501 (LRQPPGPVPTPPLPSERAEHTPMAPGGSTHR) is disordered. A compositionally biased stretch (pro residues) spans 474-484 (PPGPVPTPPLP). Thr-480 carries the phosphothreonine modification. Ser-498 and Ser-536 each carry phosphoserine. Thr-537 carries the phosphothreonine modification. Tyr-545 and Tyr-554 each carry phosphotyrosine. A phosphoserine mark is found at Ser-561, Ser-571, Ser-592, and Ser-596. The interval 572–606 (PLLSCSQEGSRHTSKLSRHGSGADSDYENTQSGDP) is disordered. Residue Thr-601 is modified to Phosphothreonine. Ser-630 is subject to Phosphoserine. Positions 637–761 (PGLPSTEDVI…VTITTREKKQ (125 aa)) are interaction with PXN and TGFB1I1.

Forms homodimers and possibly oligomers. May forms heterooligomers with GIT2. Interacts with G protein-coupled receptor kinases, including GRK2, GRK3, GRK5 and GRK6. Interacts with PPFIA1, PPFIA2 and PPFIA4. Interacts with GRIP1 and forms a ternary complex with PPFIA1 and GRIP1. Directly interacts with ARHGEF7/beta-PIX, forming in vitro a heptameric complex made of a GIT1 dimer and an ARHGEF7 trimer. Directly interacts with PXN/paxillin; this interaction is enhanced in the presence of ARHGEF7. Directly interacts (via C-terminus) with TGFB1I1/Hic-5 (via LD motif 3). Directly interacts with PTK2/FAK1. May interact with PTK2B/PYK2; this interaction may be indirect. Interacts with AMPA receptors GRIA2/3. Directly interacts with protein Piccolo/PCLO. Forms a complex with Ephrin-B1/EFNB1 and NCK2/GRB4 (via SH2); this interaction is important for spine morphogenesis and synapse formation. Interaction with NCK2 is transient and depends upon GIT1 phosphorylation at Tyr-383. Interacts with GRIN3A/GluN3A (via C-terminus); this interaction competes with GIT1 interaction with ARHGEF7 and limits synaptic localization of GIT1. Interacts with IKBKG/NEMO in resting bone mesenchymal stem cells, as well as in TNF-stimulated cells; this interaction may increase IKBKG affinity for 'Lys-63'-linked polyubiquitin chains. Interacts with GABA(A) receptors, including GABRB3 and GABRG2. Interacts with SCRIB. Interacts (via N- and C-terminus) with ENTR1/SDCCAG3 (via N-terminus); this interaction is direct. May form a tripartite complex with ENTR1 and PTPN13. Interacts with YWHAZ. Interacts with PAK1. Interacts with PAK3. Directly interacts (via N-terminus) with gamma-tubulin. Interacts with MAPK1 and MAPK3; this interaction is required for MAPK1/3 recruitment to focal adhesions. In terms of processing, phosphorylated by PAK1. Phosphorylation on tyrosine residues may be catalyzed by PTK2/FAK1 and SRC in growing fibroblasts. Phosphorylation at Tyr-383 is induced by activation of Ephrin-B1/EFNB1 and catalyzed by SRC family kinases. It is required for the interaction with NCK2 and for GIT1 recruitment to synapses in hippocampal neurons.

It is found in the cytoplasm. It localises to the synapse. The protein resides in the presynapse. Its subcellular location is the postsynapse. The protein localises to the postsynaptic density. It is found in the cell junction. It localises to the focal adhesion. The protein resides in the cell projection. Its subcellular location is the lamellipodium. The protein localises to the cytoskeleton. It is found in the microtubule organizing center. It localises to the centrosome. The protein resides in the spindle pole. GTPase-activating protein for ADP ribosylation factor family members, including ARF1. Multidomain scaffold protein that interacts with numerous proteins and therefore participates in many cellular functions, including receptor internalization, focal adhesion remodeling, and signaling by both G protein-coupled receptors and tyrosine kinase receptors. Through PAK1 activation, positively regulates microtubule nucleation during interphase. Plays a role in the regulation of cytokinesis; for this function, may act in a pathway also involving ENTR1 and PTPN13. May promote cell motility both by regulating focal complex dynamics and by local activation of RAC1. May act as scaffold for MAPK1/3 signal transduction in focal adhesions. Recruits MAPK1/3/ERK1/2 to focal adhesions after EGF stimulation via a Src-dependent pathway, hence stimulating cell migration. Plays a role in brain development and function. Involved in the regulation of spine density and synaptic plasticity that is required for processes involved in learning. Plays an important role in dendritic spine morphogenesis and synapse formation. In hippocampal neurons, recruits guanine nucleotide exchange factors (GEFs), such as ARHGEF7/beta-PIX, to the synaptic membrane. These in turn locally activate RAC1, which is an essential step for spine morphogenesis and synapse formation. May contribute to the organization of presynaptic active zones through oligomerization and formation of a Piccolo/PCLO-based protein network, which includes ARHGEF7/beta-PIX and FAK1. In neurons, through its interaction with liprin-alpha family members, may be required for AMPA receptor (GRIA2/3) proper targeting to the cell membrane. In complex with GABA(A) receptors and ARHGEF7, plays a crucial role in regulating GABA(A) receptor synaptic stability, maintaining GPHN/gephyrin scaffolds and hence GABAergic inhibitory synaptic transmission, by locally coordinating RAC1 and PAK1 downstream effector activity, leading to F-actin stabilization. May also be important for RAC1 downstream signaling pathway through PAK3 and regulation of neuronal inhibitory transmission at presynaptic input. Required for successful bone regeneration during fracture healing. The function in intramembranous ossification may, at least partly, exerted by macrophages in which GIT1 is a key negative regulator of redox homeostasis, IL1B production, and glycolysis, acting through the ERK1/2/NRF2/NFE2L2 axis. May play a role in angiogenesis during fracture healing. In this process, may regulate activation of the canonical NF-kappa-B signal in bone mesenchymal stem cells by enhancing the interaction between NEMO and 'Lys-63'-ubiquitinated RIPK1/RIP1, eventually leading to enhanced production of VEGFA and others angiogenic factors. Essential for VEGF signaling through the activation of phospholipase C-gamma and ERK1/2, hence may control endothelial cell proliferation and angiogenesis. This chain is ARF GTPase-activating protein GIT1 (GIT1), found in Homo sapiens (Human).